The primary structure comprises 548 residues: Probable thiamine biosynthetic bifunctional enzyme, chloroplastic (548 aa).

Over residues Met1 to His10 the composition is skewed to polar residues. The disordered stretch occupies residues Met1 to Arg40. The N-terminal 47 residues, Met1–Ser47, are a transit peptide targeting the chloroplast. A compositionally biased stretch (low complexity) spans Pro11–Pro28. 4-amino-2-methyl-5-(diphosphooxymethyl)pyrimidine-binding positions include Gln372 to Lys376 and Asn404. Asp405 and Asp424 together coordinate Mg(2+). Residue Ser443 participates in 4-amino-2-methyl-5-(diphosphooxymethyl)pyrimidine binding. Position 469-471 (Thr469–Thr471) interacts with 2-[(2R,5Z)-2-carboxy-4-methylthiazol-5(2H)-ylidene]ethyl phosphate. 4-amino-2-methyl-5-(diphosphooxymethyl)pyrimidine is bound at residue Lys472. 2-[(2R,5Z)-2-carboxy-4-methylthiazol-5(2H)-ylidene]ethyl phosphate contacts are provided by residues Gly499 and Val522–Ser523.

It belongs to the thiamine-phosphate synthase family. It depends on Mg(2+) as a cofactor.

It is found in the plastid. Its subcellular location is the chloroplast. It carries out the reaction 2-[(2R,5Z)-2-carboxy-4-methylthiazol-5(2H)-ylidene]ethyl phosphate + 4-amino-2-methyl-5-(diphosphooxymethyl)pyrimidine + 2 H(+) = thiamine phosphate + CO2 + diphosphate. It catalyses the reaction 2-(2-carboxy-4-methylthiazol-5-yl)ethyl phosphate + 4-amino-2-methyl-5-(diphosphooxymethyl)pyrimidine + 2 H(+) = thiamine phosphate + CO2 + diphosphate. The catalysed reaction is 4-methyl-5-(2-phosphooxyethyl)-thiazole + 4-amino-2-methyl-5-(diphosphooxymethyl)pyrimidine + H(+) = thiamine phosphate + diphosphate. The enzyme catalyses 4-amino-5-hydroxymethyl-2-methylpyrimidine + ATP = 4-amino-2-methyl-5-(phosphooxymethyl)pyrimidine + ADP + H(+). It participates in cofactor biosynthesis; thiamine diphosphate biosynthesis; thiamine phosphate from 4-amino-2-methyl-5-diphosphomethylpyrimidine and 4-methyl-5-(2-phosphoethyl)-thiazole: step 1/1. Its pathway is cofactor biosynthesis; thiamine diphosphate biosynthesis; 4-amino-2-methyl-5-diphosphomethylpyrimidine from 5-amino-1-(5-phospho-D-ribosyl)imidazole: step 2/3. Functionally, essential for thiamine biosynthesis. Bifunctional enzyme that catalyzes the phosphorylation of hydroxymethylpyrimidine phosphate (HMP-P) to HMP-PP and condenses 4-methyl-5-(beta-hydroxyethyl)thiazole monophosphate (THZ-P) and 2-methyl-4-amino-5-hydroxymethyl pyrimidine pyrophosphate (HMP-PP) to form thiamine monophosphate (TMP). This chain is Probable thiamine biosynthetic bifunctional enzyme, chloroplastic, found in Oryza sativa subsp. japonica (Rice).